The chain runs to 135 residues: Ribosome-binding factor A (135 aa).

This sequence belongs to the RbfA family. In terms of assembly, monomer. Binds 30S ribosomal subunits, but not 50S ribosomal subunits or 70S ribosomes.

It is found in the cytoplasm. In terms of biological role, one of several proteins that assist in the late maturation steps of the functional core of the 30S ribosomal subunit. Associates with free 30S ribosomal subunits (but not with 30S subunits that are part of 70S ribosomes or polysomes). Required for efficient processing of 16S rRNA. May interact with the 5'-terminal helix region of 16S rRNA. The polypeptide is Ribosome-binding factor A (Bartonella quintana (strain Toulouse) (Rochalimaea quintana)).